The following is a 352-amino-acid chain: Rhodopsin, deep-sea form (352 aa).

The Extracellular portion of the chain corresponds to 1 to 36 (MNGTEGPNFYIPMSNITGVVRSPFEYPQYYLAEPWA). N-linked (GlcNAc...) asparagine glycans are attached at residues Asn-2 and Asn-15. The chain crosses the membrane as a helical span at residues 37–61 (YTILAAYMFTLILLGFPVNFLTLYV). Over 62–73 (TIEHKKLRTPLN) the chain is Cytoplasmic. Residues 74–98 (YILLNLAVANLFMVFGGFTTTVYTS) traverse the membrane as a helical segment. The Extracellular portion of the chain corresponds to 99 to 113 (MHGYFVFGETGCNLE). Cysteines 110 and 187 form a disulfide. The chain crosses the membrane as a helical span at residues 114-133 (GYFATLGGEISLWSLVVLAI). The Cytoplasmic portion of the chain corresponds to 134 to 152 (ERWVVVCKPMSNFRFGENH). A helical transmembrane segment spans residues 153–176 (AIMGLAFTWIMANSCAMPPLFGWS). Residues 177–202 (RYIPEGMQCSCGVDYYTLKPEVNNES) lie on the Extracellular side of the membrane. The N-linked (GlcNAc...) asparagine glycan is linked to Asn-200. Residues 203-230 (FVIYMFIVHFSVPLTIISFCYGRLVCTV) form a helical membrane-spanning segment. Over 231–252 (KEAAAQQQESETTQRAEREVTR) the chain is Cytoplasmic. The chain crosses the membrane as a helical span at residues 253–276 (MVVIMVIAFLVCWVPYASVAWYIF). The Extracellular segment spans residues 277 to 284 (THQGSTFG). Residues 285–309 (PVFMTVPSFFAKSSAIYNPLIYICL) form a helical membrane-spanning segment. Lys-296 is subject to N6-(retinylidene)lysine. Topologically, residues 310–352 (NSQFRNCMITTLFCGKNPFQEEEGASTTASKTEASSVSSVSPA) are cytoplasmic. Cys-323 carries S-palmitoyl cysteine lipidation. A disordered region spans residues 333-352 (GASTTASKTEASSVSSVSPA). Residues 334 to 352 (ASTTASKTEASSVSSVSPA) are compositionally biased toward low complexity.

The protein belongs to the G-protein coupled receptor 1 family. Opsin subfamily. In terms of processing, phosphorylated on some or all of the serine and threonine residues present in the C-terminal region. In terms of tissue distribution, rod shaped photoreceptor cells which mediates vision in dim light.

It is found in the membrane. Visual pigments such as rhodopsin and porphyropsin are light-absorbing molecules that mediate vision. Rhodopsin consists of an apoprotein, opsin, covalently linked to 11-cis-retinal. This receptor is coupled to the activation of phospholipase C. Porphyropsin consists of opsin covalently linked to 11-cis 3,4-didehydroretinal. The sequence is that of Rhodopsin, deep-sea form from Anguilla anguilla (European freshwater eel).